A 4427-amino-acid polypeptide reads, in one-letter code: Dynein axonemal heavy chain 2 (4427 aa).

Residues 1 to 73 form a disordered region; it reads MSSKAEKKQR…AQSEESVEPE (73 aa). The stem stretch occupies residues 1 to 1764; sequence MSSKAEKKQR…VIRQTNTQFQ (1764 aa). Residues 14–23 are compositionally biased toward polar residues; the sequence is RGSSQASWSG. The segment covering 50 to 59 has biased composition (basic and acidic residues); the sequence is LPKEEPEPRL. Residues 1404 to 1439 form a TPR 1 repeat; the sequence is EDNQVALSTMKASRFVKAFEKDVDHWERCLSLILEV. AAA regions lie at residues 1765–1986, 2046–2273, 2378–2625, and 2722–2974; these read YNYE…LLRY, ETVE…DNCK, RYPP…VFQG, and EYNL…LRRH. ATP contacts are provided by residues 1803 to 1810, 2084 to 2091, and 2416 to 2423; these read GPAGTGKT, GCTGSGKT, and GPVGTGKT. Residues 2721–2754 form a TPR 2 repeat; it reads NEYNLSPSVVPMQLVLFREAIEHITRIVRVIGQP. 2762 to 2769 contributes to the ATP binding site; that stretch reads GIGGSGRQ. The tract at residues 2989-3272 is stalk; sequence YKKLLGEKRQ…EELRKKSEEM (284 aa). Residues 3012–3049 are a coiled coil; that stretch reads FKIDETREKVQVMSLELEDAKKKVAEFQKQCEEYLVII. The TPR 3 repeat unit spans residues 3072–3105; sequence VEEIKCQALADNAQKDLEEALPALEEAMRALESL. Coiled-coil stretches lie at residues 3216–3304 and 3523–3567; these read KRIR…EEDL and VRKE…GSLL. 2 AAA regions span residues 3358–3588 and 3804–4023; these read LCNP…EVTE and VTSF…LLSL. TPR repeat units lie at residues 4072 to 4104 and 4105 to 4140; these read STPF…LLPG and MDPP…QPQI.

The protein belongs to the dynein heavy chain family. In terms of assembly, part of the axonemal inner dynein arm complex that consists of at least two heavy chains and a number of intermediate and light chains. Interacts with DNAI4. Expressed primarily in trachea and testis, 2 tissues containing axonemal structures. Also expressed in lung. Expressed in spermatozoa (at protein level).

The protein localises to the cytoplasm. Its subcellular location is the cytoskeleton. It localises to the cilium axoneme. It is found in the flagellum axoneme. As part of the axonemal inner dynein arm complex plays a central role in ciliary beat. Expressed in sperm flagellum, it is required for sperm motility. Dyneins are microtubule-based molecular motors possessing ATPase activities that can convert the chemical energy of ATP into relative sliding between adjacent microtubule doublets to generate ciliary bending. This chain is Dynein axonemal heavy chain 2, found in Homo sapiens (Human).